Consider the following 61-residue polypeptide: Protein stunted (61 aa).

The segment at 3–15 (AWRAAGITYIQYS) is sufficient for mth activation.

Belongs to the eukaryotic ATPase epsilon family.

Its function is as follows. Activates the G-protein coupled receptor mth in vitro, leading to increased intracellular calcium ion levels. This chain is Protein stunted, found in Drosophila melanogaster (Fruit fly).